The sequence spans 482 residues: Anthranilate synthase component 1 (482 aa).

L-tryptophan contacts are provided by residues serine 47 and 267–269 (PYM). 302–303 (GT) lines the chorismate pocket. Glutamate 329 provides a ligand contact to Mg(2+). Chorismate contacts are provided by residues tyrosine 417, arginine 437, 451–453 (GGG), and glycine 453. Position 466 (glutamate 466) interacts with Mg(2+).

The protein belongs to the anthranilate synthase component I family. As to quaternary structure, heterotetramer consisting of two non-identical subunits: a beta subunit (TrpG) and a large alpha subunit (TrpE). Requires Mg(2+) as cofactor.

The enzyme catalyses chorismate + L-glutamine = anthranilate + pyruvate + L-glutamate + H(+). It functions in the pathway amino-acid biosynthesis; L-tryptophan biosynthesis; L-tryptophan from chorismate: step 1/5. With respect to regulation, feedback inhibited by tryptophan. Functionally, part of a heterotetrameric complex that catalyzes the two-step biosynthesis of anthranilate, an intermediate in the biosynthesis of L-tryptophan. In the first step, the glutamine-binding beta subunit (TrpG) of anthranilate synthase (AS) provides the glutamine amidotransferase activity which generates ammonia as a substrate that, along with chorismate, is used in the second step, catalyzed by the large alpha subunit of AS (TrpE) to produce anthranilate. In the absence of TrpG, TrpE can synthesize anthranilate directly from chorismate and high concentrations of ammonia. This is Anthranilate synthase component 1 (trpE) from Spirochaeta aurantia.